Consider the following 149-residue polypeptide: uncharacterized protein (149 aa).

This is an uncharacterized protein from Caenorhabditis elegans.